The chain runs to 288 residues: G1/S-specific cyclin-D2 (288 aa).

The Cyclin N-terminal domain maps to 26–151 (VLQNLLTIEE…VVLGKLKWNL (126 aa)). The interval 264–288 (DQDGSKSEDELDQASTPTDVRDIDL) is disordered. At serine 270 the chain carries Phosphoserine. Threonine 279 is subject to Phosphothreonine.

This sequence belongs to the cyclin family. Cyclin D subfamily. Interacts with either CDK4 or CDK6 protein kinase to form a serine/threonine kinase holoenzyme complex. The cyclin subunit imparts substrate specificity to the complex. In terms of processing, phosphorylation at Thr-279 by MAP kinases is required for ubiquitination and degradation by the DCX(AMBRA1) complex. Ubiquitinated by the DCX(AMBRA1) complex during the transition from G1 to S cell phase, leading to its degradation: ubiquitination is dependent on Thr-279 phosphorylation. The DCX(AMBRA1) complex represents the major regulator of CCND2 stability during the G1/S transition. Polyubiquitinated by the SCF(FBXL2) complex, leading to proteasomal degradation.

Its subcellular location is the nucleus. It is found in the cytoplasm. The protein localises to the nucleus membrane. Functionally, regulatory component of the cyclin D2-CDK4 (DC) complex that phosphorylates and inhibits members of the retinoblastoma (RB) protein family including RB1 and regulates the cell-cycle during G(1)/S transition. Phosphorylation of RB1 allows dissociation of the transcription factor E2F from the RB/E2F complex and the subsequent transcription of E2F target genes which are responsible for the progression through the G(1) phase. Hypophosphorylates RB1 in early G(1) phase. Cyclin D-CDK4 complexes are major integrators of various mitogenenic and antimitogenic signals. This chain is G1/S-specific cyclin-D2 (CCND2), found in Sus scrofa (Pig).